A 334-amino-acid polypeptide reads, in one-letter code: MATLKEKLIAPVAEEETRIPNNKITVVGVGQVGMACAISILGKSLTDELALVDVLEDKLKGEMMDLQHGSLFLQTPKIVADKDYSVTANSKIVVVTAGVRQQEGESRLNLVQRNVNVFKFIIPQIVKYSPDCIIIVVSNPVDILTYVTWKLSGLPKHRVIGSGCNLDSARFRYLMAEKLGIHPSSCHGWILGEHGDSSVAVWSGVNVAGVSLQELNPEMGTDNDSENWKEVHKMVVESAYEVIKLKGYTNWAIGLSVADLIESMLKNLSRIHPVSTMVKGMYGIENEVFLSLPCILNARGLTSVINQKLKDEEVAQLKKSADTLWGIQKDLKDL.

Position 2 is an N-acetylalanine (alanine 2). Position 7 is an N6-acetyllysine (lysine 7). Position 44 is a phosphoserine (serine 44). NAD(+) contacts are provided by residues 53–58 (DVLEDK) and arginine 100. Lysine 58 is subject to N6-acetyllysine. Residue arginine 107 participates in substrate binding. Lysine 119 is subject to N6-acetyllysine. Position 139 (asparagine 139) interacts with NAD(+). Substrate contacts are provided by asparagine 139 and arginine 170. Histidine 194 functions as the Proton acceptor in the catalytic mechanism. A Phosphotyrosine modification is found at tyrosine 240. Threonine 249 is a substrate binding site. Lysine 329 is subject to N6-acetyllysine.

The protein belongs to the LDH/MDH superfamily. LDH family. Homotetramer. Interacts with PTEN upstream reading frame protein MP31; the interaction leads to inhibition of mitochondrial lactate dehydrogenase activity, preventing conversion of lactate to pyruvate in mitochondria.

The protein resides in the cytoplasm. Its subcellular location is the mitochondrion inner membrane. It carries out the reaction (S)-lactate + NAD(+) = pyruvate + NADH + H(+). It participates in fermentation; pyruvate fermentation to lactate; (S)-lactate from pyruvate: step 1/1. Its function is as follows. Interconverts simultaneously and stereospecifically pyruvate and lactate with concomitant interconversion of NADH and NAD(+). The polypeptide is L-lactate dehydrogenase B chain (LDHB) (Bos taurus (Bovine)).